We begin with the raw amino-acid sequence, 446 residues long: Tubulin beta-6 chain (446 aa).

An MREI motif motif is present at residues 1 to 4 (MREI). Residues Gln-11, Glu-69, Ser-138, Gly-142, Thr-143, and Gly-144 each contribute to the GTP site. Mg(2+) is bound at residue Glu-69. Ser-172 bears the Phosphoserine; by CDK1 mark. 2 residues coordinate GTP: Asn-204 and Asn-226. Residue Glu-438 is modified to 5-glutamyl polyglutamate.

It belongs to the tubulin family. Dimer of alpha and beta chains. A typical microtubule is a hollow water-filled tube with an outer diameter of 25 nm and an inner diameter of 15 nM. Alpha-beta heterodimers associate head-to-tail to form protofilaments running lengthwise along the microtubule wall with the beta-tubulin subunit facing the microtubule plus end conferring a structural polarity. Microtubules usually have 13 protofilaments but different protofilament numbers can be found in some organisms and specialized cells. Mg(2+) serves as cofactor. In terms of processing, some glutamate residues at the C-terminus are polyglutamylated, resulting in polyglutamate chains on the gamma-carboxyl group. Polyglutamylation plays a key role in microtubule severing by spastin (SPAST). SPAST preferentially recognizes and acts on microtubules decorated with short polyglutamate tails: severing activity by SPAST increases as the number of glutamates per tubulin rises from one to eight, but decreases beyond this glutamylation threshold. Glutamylation is also involved in cilia motility. Some glutamate residues at the C-terminus are monoglycylated but not polyglycylated due to the absence of functional TTLL10 in human. Monoglycylation is mainly limited to tubulin incorporated into cilia and flagella axonemes, which is required for their stability and maintenance. Flagella glycylation controls sperm motility. Both polyglutamylation and monoglycylation can coexist on the same protein on adjacent residues, and lowering glycylation levels increases polyglutamylation, and reciprocally. Post-translationally, phosphorylated on Ser-172 by CDK1 during the cell cycle, from metaphase to telophase, but not in interphase. This phosphorylation inhibits tubulin incorporation into microtubules. In terms of tissue distribution, ubiquitous. Maximal expression in breast and lung, where it represents around 10% of all beta-tubulins. Largely decreased expression in most cancerous tissues.

It localises to the cytoplasm. Its subcellular location is the cytoskeleton. Tubulin is the major constituent of microtubules, a cylinder consisting of laterally associated linear protofilaments composed of alpha- and beta-tubulin heterodimers. Microtubules grow by the addition of GTP-tubulin dimers to the microtubule end, where a stabilizing cap forms. Below the cap, tubulin dimers are in GDP-bound state, owing to GTPase activity of alpha-tubulin. The sequence is that of Tubulin beta-6 chain (TUBB6) from Homo sapiens (Human).